The sequence spans 215 residues: MTKLTARQQQVFDLIRRAIERSGFPPTRAEIAAELGFSSPNAAEEHLRALARKGVIELAAGASRGIRLLGVDDAPHQFTLPHAALMQLSLPLVGRVAAGSPILAQEHISQHYACDPALFTSKPDYLLKVRGLSMRDAGILDGDLLAVQKRTEAKDGQIIVARLGDDVTVKRLMRRPGGLELIAENPDYENIFVKAGSADFALEGIAVGLIRSGEL.

The H-T-H motif DNA-binding region spans 28–48 (RAEIAAELGFSSPNAAEEHLR). Catalysis depends on for autocatalytic cleavage activity residues Ser133 and Lys170.

Belongs to the peptidase S24 family. As to quaternary structure, homodimer.

The enzyme catalyses Hydrolysis of Ala-|-Gly bond in repressor LexA.. Functionally, represses a number of genes involved in the response to DNA damage (SOS response), including recA and lexA. In the presence of single-stranded DNA, RecA interacts with LexA causing an autocatalytic cleavage which disrupts the DNA-binding part of LexA, leading to derepression of the SOS regulon and eventually DNA repair. This Burkholderia cenocepacia (strain ATCC BAA-245 / DSM 16553 / LMG 16656 / NCTC 13227 / J2315 / CF5610) (Burkholderia cepacia (strain J2315)) protein is LexA repressor.